Consider the following 237-residue polypeptide: Ribosomal RNA small subunit methyltransferase G (237 aa).

Residues Gly75, Phe80, 127–128 (AE), and Arg146 contribute to the S-adenosyl-L-methionine site.

The protein belongs to the methyltransferase superfamily. RNA methyltransferase RsmG family.

It is found in the cytoplasm. Its function is as follows. Specifically methylates the N7 position of a guanine in 16S rRNA. The sequence is that of Ribosomal RNA small subunit methyltransferase G from Synechococcus sp. (strain RCC307).